Consider the following 448-residue polypeptide: Porin AaxA (448 aa).

The first 24 residues, 1–24, serve as a signal peptide directing secretion; that stretch reads MASFRSSLLSALCAYGMMVMPAYA.

The protein belongs to the OprB family.

The protein localises to the cell outer membrane. Facilitates L-arginine uptake, as part of the AaxABC system. The arginine uptake by the bacterium in the macrophage may be a virulence factor against the host innate immune response. This is Porin AaxA (aaxA) from Chlamydia abortus (strain DSM 27085 / S26/3) (Chlamydophila abortus).